Reading from the N-terminus, the 124-residue chain is Aspartate 1-decarboxylase (124 aa).

The active-site Schiff-base intermediate with substrate; via pyruvic acid is the S25. S25 is subject to Pyruvic acid (Ser). T57 provides a ligand contact to substrate. Residue Y58 is the Proton donor of the active site. A substrate-binding site is contributed by G73–A75.

The protein belongs to the PanD family. In terms of assembly, heterooctamer of four alpha and four beta subunits. It depends on pyruvate as a cofactor. Post-translationally, is synthesized initially as an inactive proenzyme, which is activated by self-cleavage at a specific serine bond to produce a beta-subunit with a hydroxyl group at its C-terminus and an alpha-subunit with a pyruvoyl group at its N-terminus.

The protein resides in the cytoplasm. The enzyme catalyses L-aspartate + H(+) = beta-alanine + CO2. Its pathway is cofactor biosynthesis; (R)-pantothenate biosynthesis; beta-alanine from L-aspartate: step 1/1. In terms of biological role, catalyzes the pyruvoyl-dependent decarboxylation of aspartate to produce beta-alanine. The sequence is that of Aspartate 1-decarboxylase from Clostridium beijerinckii (strain ATCC 51743 / NCIMB 8052) (Clostridium acetobutylicum).